The primary structure comprises 501 residues: Lysine--tRNA ligase (501 aa).

The Mg(2+) site is built by glutamate 410 and glutamate 417.

Belongs to the class-II aminoacyl-tRNA synthetase family. Homodimer. Mg(2+) is required as a cofactor.

The protein resides in the cytoplasm. The catalysed reaction is tRNA(Lys) + L-lysine + ATP = L-lysyl-tRNA(Lys) + AMP + diphosphate. This chain is Lysine--tRNA ligase, found in Shewanella halifaxensis (strain HAW-EB4).